The following is a 104-amino-acid chain: Nucleoid-associated protein GAU_1113 (104 aa).

Belongs to the YbaB/EbfC family. In terms of assembly, homodimer.

Its subcellular location is the cytoplasm. The protein resides in the nucleoid. In terms of biological role, binds to DNA and alters its conformation. May be involved in regulation of gene expression, nucleoid organization and DNA protection. This Gemmatimonas aurantiaca (strain DSM 14586 / JCM 11422 / NBRC 100505 / T-27) protein is Nucleoid-associated protein GAU_1113.